The chain runs to 349 residues: MSSLSGKVQTVLGLVEPGTLGRTLTHEHLTMTFDCCYYPPPPSHEAISKEPIIMKNLFWIQKNPYSHKENLQLNQETEAIKEELLDFKAKGGGALVENTTTGLSRDVRTLKWLAEETGVHIIAGAGFYVDATHSSETRAKSVEQLTDVLVNEILCGADGTSIKCGVIGEIGCSWPLTDSERKVLQATAHAQTQLGCPVIIHPGRNQSAPFQIIRVLQEAGGDISKTVMSHIDRTILDKKELLEFAQFGCYLEYDLFGTELFHYQFNPDIDMPNDNKRIKRVRLLVDEGYEDRILMAHDIHTKNRLTKYGGHGYSHILTNIVPKMLLRGITEGALDKILIENPKQWLTFK.

Residues histidine 26, histidine 28, glutamate 169, histidine 201, histidine 230, and aspartate 298 each coordinate a divalent metal cation.

Belongs to the metallo-dependent hydrolases superfamily. Phosphotriesterase family. A divalent metal cation is required as a cofactor.

The protein localises to the cytoplasm. It is found in the cytosol. It carries out the reaction N-acetyltaurine + H2O = taurine + acetate. The enzyme catalyses N-propanoyltaurine + H2O = propanoate + taurine. It catalyses the reaction N-acetyl-L-methionine + H2O = L-methionine + acetate. The catalysed reaction is N-acetyl-L-isoleucine + H2O = L-isoleucine + acetate. It carries out the reaction N-acetyl-L-leucine + H2O = L-leucine + acetate. The enzyme catalyses N-acetyl-L-valine + H2O = L-valine + acetate. N-acetyltaurine hydrolase that regulates feeding by catalyzing the hydrolysis of N-acetyltaurine into taurine and acetate. N-acetyltaurine has anorexigenic and anti-obesity effects that are dependent on GFRAL receptor and GDF15. PTER also acts on other N-acetyl amino acids (Met, Ile, Leu, Val) and N-propionyltaurine, but at lower rates. This is N-acetyltaurine hydrolase (PTER) from Bos taurus (Bovine).